The primary structure comprises 62 residues: Large ribosomal subunit protein bL33 (62 aa).

This sequence belongs to the bacterial ribosomal protein bL33 family.

In Bacteroides fragilis (strain ATCC 25285 / DSM 2151 / CCUG 4856 / JCM 11019 / LMG 10263 / NCTC 9343 / Onslow / VPI 2553 / EN-2), this protein is Large ribosomal subunit protein bL33.